We begin with the raw amino-acid sequence, 481 residues long: Cobyric acid synthase (481 aa).

The GATase cobBQ-type domain maps to 248–435; the sequence is ALTVAWLAFS…LHGMFGSDRF (188 aa). Residue Cys330 is the Nucleophile of the active site. His427 is a catalytic residue.

This sequence belongs to the CobB/CobQ family. CobQ subfamily.

The protein operates within cofactor biosynthesis; adenosylcobalamin biosynthesis. Functionally, catalyzes amidations at positions B, D, E, and G on adenosylcobyrinic A,C-diamide. NH(2) groups are provided by glutamine, and one molecule of ATP is hydrogenolyzed for each amidation. This is Cobyric acid synthase from Cereibacter sphaeroides (strain ATCC 17025 / ATH 2.4.3) (Rhodobacter sphaeroides).